A 247-amino-acid polypeptide reads, in one-letter code: tRNA uridine(34) hydroxylase (247 aa).

Residues Thr124–Asn218 form the Rhodanese domain. The active-site Cysteine persulfide intermediate is Cys178.

The protein belongs to the TrhO family.

It catalyses the reaction uridine(34) in tRNA + AH2 + O2 = 5-hydroxyuridine(34) in tRNA + A + H2O. Catalyzes oxygen-dependent 5-hydroxyuridine (ho5U) modification at position 34 in tRNAs. The sequence is that of tRNA uridine(34) hydroxylase from Rickettsia akari (strain Hartford).